A 542-amino-acid chain; its full sequence is Nuclear speckle splicing regulatory protein 1 (542 aa).

Positions 21 to 53 (RVLQKPSVFGSDSDDDETSVSESLQREAAKKQA) are disordered. Phosphoserine occurs at positions 27, 31, and 33. Residues 103–172 (IHNLLKAVEI…RAAALEAHLD (70 aa)) adopt a coiled-coil conformation. Residues 105–169 (NLLKAVEIRK…REKRAAALEA (65 aa)) are necessary for alternative splicing activity. Positions 190 to 516 (AVGEEAAPKS…FAKRSNEETV (327 aa)) are disordered. Residues lysine 198 and lysine 209 each participate in a glycyl lysine isopeptide (Lys-Gly) (interchain with G-Cter in SUMO2) cross-link. Over residues 200 to 217 (SFREARTVIKEEKLRGYP) the composition is skewed to basic and acidic residues. A compositionally biased stretch (polar residues) spans 223–232 (ESRPPQQSCV). The span at 239–256 (EAEENPDADREFDDESSE) shows a compositional bias: acidic residues. 2 positions are modified to phosphoserine: serine 254 and serine 255. Residues 257 to 271 (DGEKRDHKVKSRGED) are compositionally biased toward basic and acidic residues. Lysine 277 is modified (N6-acetyllysine). The segment covering 277-288 (KHPKHHKNRAHS) has biased composition (basic residues). Lysine 280 is covalently cross-linked (Glycyl lysine isopeptide (Lys-Gly) (interchain with G-Cter in SUMO2)). Composition is skewed to basic and acidic residues over residues 309–335 (RGHEHQDRQSRDQESCHKDRSHREEKS), 343–475 (SHKD…KPSH), and 485–501 (RLAEERPEKGSEQERPP). The stretch at 372–413 (KREKYSSREQERDRQRNDHDRYSEKEKKRKEKEEHTKARRER) forms a coiled coil. Phosphoserine is present on serine 443.

Belongs to the NSRP1 family. In terms of assembly, interacts (via C-terminus) with SRSF1. Interacts (via C-terminus) with SRSF2.

It is found in the nucleus. It localises to the nucleus speckle. Functionally, RNA-binding protein that mediates pre-mRNA alternative splicing regulation. The chain is Nuclear speckle splicing regulatory protein 1 (Nsrp1) from Mus musculus (Mouse).